Reading from the N-terminus, the 235-residue chain is Protein YIP4 (235 aa).

The next 5 membrane-spanning stretches (helical) occupy residues 89–109, 114–134, 145–165, 186–206, and 215–235; these read ISAN…SLFV, SLFS…ALHL, LISY…NALV, VLSL…VAAV, and IIEI…STIL.

The protein belongs to the YIP1 family. As to quaternary structure, interacts with TVP18, TVP23, YIP1 and YIP5. Interacts with SEC4, YPT1, YPT6, YPT7, YPT10, YPT11, YPT31, YPT32 and YPT52; These proteins are all Rab GTPases.

Its subcellular location is the golgi apparatus membrane. In terms of biological role, may be involved in proper membrane localization of Rab GTPases. This is Protein YIP4 (YIP4) from Saccharomyces cerevisiae (strain ATCC 204508 / S288c) (Baker's yeast).